Here is a 268-residue protein sequence, read N- to C-terminus: Xyloglucan endotransglucosylase protein 7 (268 aa).

The GH16 domain maps to 1–196; it reads MNAEGGNLHR…WTKAPFTASY (196 aa). Catalysis depends on Glu-82, which acts as the Nucleophile. Glu-86 serves as the catalytic Proton donor. Residue Glu-86 coordinates xyloglucan. N-linked (GlcNAc...) asparagine glycosylation is present at Asn-90. Residues 99-101, 109-111, 175-176, and Gly-180 contribute to the xyloglucan site; these read HTN, NRE, and DW. 2 disulfides stabilise this stretch: Cys-204–Cys-213 and Cys-251–Cys-265. Residue Arg-256 participates in xyloglucan binding.

The protein belongs to the glycosyl hydrolase 16 family. XTH group 2 subfamily. In terms of processing, contains at least one intrachain disulfide bond essential for its enzymatic activity. As to expression, expressed at a very high level in flowers and stems (picked at anthesis), and at a lower level in ripe leaves and fruits.

It is found in the cytoplasm. It carries out the reaction breaks a beta-(1-&gt;4) bond in the backbone of a xyloglucan and transfers the xyloglucanyl segment on to O-4 of the non-reducing terminal glucose residue of an acceptor, which can be a xyloglucan or an oligosaccharide of xyloglucan.. Catalyzes xyloglucan endotransglycosylation (XET). Cleaves and religates xyloglucan polymers. Does not catalyze xyloglucan endohydrolysis (XEH). Probably involved in cell wall assembly and synthesis in fast growing tissues and in the maintenance of firmness in mature fruits. This Diospyros kaki (Kaki persimmon) protein is Xyloglucan endotransglucosylase protein 7.